Reading from the N-terminus, the 862-residue chain is MQYVGRALGSVSKTWSSINPATLSGAIDVIVVEHPDGRLSCSPFHVRFGKFQILKPSQKKVQVFINEKLSNMPMKLSDSGEAYFVFEMGDQVTDVPDELLVSPVMSATSSPPQSPETSILEGGTEGEGEGENENKKKEKKVLEEPDFLDINDTGDSGSKNSETTGSLSPTESSTTTPPDSVEERKLVEQRTKNFQQKLNKKLTEIHIPSKLDNNGDLLLDTEGYKPNKNMMHDTDIQLKQLLKDEFGNDSDISSFIKEDKNGNIKIVNPYEHLTDLSPPGTPPTMATSGSVLGLDAMESGSTLNSLSSSPSGSDTEDETSFSKEQSSKSEKTSKKGTAGSGETEKRYIRTIRLTNDQLKCLNLTYGENDLKFSVDHGKAIVTSKLFVWRWDVPIVISDIDGTITKSDALGHVLAMIGKDWTHLGVAKLFSEISRNGYNILYLTARSAGQADSTRSYLRSIEQNGSKLPNGPVILSPDRTMAALRREVILKKPEVFKIACLNDIRSLYFEDSDNEVDTEEKSTPFFAGFGNRITDALSYRTVGIPSSRIFTINTEGEVHMELLELAGYRSSYIHINELVDHFFPPVSLDSVDLRTNTSMVPGSPPNRTLDNFDSEITSGRKTLFRGNQEEKFTDVNFWRDPLVDIDNLSDISNDDSDNIDEDTDVSQQSNISRNRANSVKTAKVTKAPQRNVSGSTNNNEVLAASSDVENASDLVSSHSSSGSTPNKSTMSKGDIGKQIYLELGSPLASPKLRYLDDMDDEDSNYNRTKSRRASSAAATSIDKEFKKLSVSKAGAPTRIVSKINVSNDVHSLGNSDTESRREQSVNETGRNQLPHNSMDDKDLDSRVSDEFDDDEFDEDEFED.

The interval 19–104 (NPATLSGAID…VPDELLVSPV (86 aa)) is N-LIP. Disordered regions lie at residues 104–183 (VMSA…SVEE) and 300–341 (GSTL…AGSG). Polar residues predominate over residues 105–117 (MSATSSPPQSPET). Phosphoserine occurs at positions 110 and 114. Residues 132–143 (NENKKKEKKVLE) are compositionally biased toward basic and acidic residues. 2 stretches are compositionally biased toward low complexity: residues 161–179 (SETT…TPPD) and 300–313 (GSTL…PSGS). At S168 the chain carries Phosphoserine. Residues 398 to 402 (DIDGT) carry the DXDXT motif motif. K496 bears the N6-acetyllysine mark. The residue at position 511 (S511) is a Phosphoserine. S602 carries the post-translational modification Phosphoserine; by CDC28. The interval 648–732 (SDISNDDSDN…TPNKSTMSKG (85 aa)) is disordered. Residues 651-663 (SNDDSDNIDEDTD) show a composition bias toward acidic residues. Polar residues-rich tracts occupy residues 664-679 (VSQQ…NSVK) and 687-699 (PQRN…NNNE). Low complexity predominate over residues 710–730 (ASDLVSSHSSSGSTPNKSTMS). T723 bears the Phosphothreonine; by CDC28 mark. A Phosphoserine; by CDC28 modification is found at S744. Phosphoserine occurs at positions 748, 773, and 774. The segment at 757–780 (MDDEDSNYNRTKSRRASSAAATSI) is disordered. Residue K801 is modified to N6-acetyllysine. The disordered stretch occupies residues 807–862 (DVHSLGNSDTESRREQSVNETGRNQLPHNSMDDKDLDSRVSDEFDDDEFDEDEFED). A phosphoserine mark is found at S810 and S814. Residue T816 is modified to Phosphothreonine. Polar residues predominate over residues 824–834 (VNETGRNQLPH). Residues 836 to 848 (SMDDKDLDSRVSD) are compositionally biased toward basic and acidic residues. Phosphoserine occurs at positions 844 and 847. Over residues 849–862 (EFDDDEFDEDEFED) the composition is skewed to acidic residues.

This sequence belongs to the lipin family. It depends on Mg(2+) as a cofactor. Post-translationally, acetylation at Lys-496 and Lys-801 by ESA1 promotes synthesis of diacylglycerol. Phosphorylated by CDC28 at the onset of mitosis, and dephosphorylated by the NEM1-SPO7 complex. Phosphorylation regulates recruitment on promoters of lipid biosynthetic enzymes.

The protein localises to the cytoplasm. The protein resides in the nucleus membrane. Its subcellular location is the endoplasmic reticulum membrane. The catalysed reaction is a 1,2-diacyl-sn-glycero-3-phosphate + H2O = a 1,2-diacyl-sn-glycerol + phosphate. Its activity is regulated as follows. Phenylglyoxal and propranolol inhibit activity in dose-dependent manners with IC(50) values of 1.3 mM and 0.2 mM, respectively. Sertraline inhibits activity in a dose-dependent manner with an IC(50) value of 85 uM; the inhibitory effects of sertraline and propranolol are additive. Functionally, mg(2+)-dependent phosphatidate (PA) phosphatase which catalyzes the dephosphorylation of PA to yield diacylglycerol. Required for de novo lipid synthesis and formation of lipid droplets. Controls transcription of phospholipid biosynthetic genes and nuclear structure by regulating the amount of membrane present at the nuclear envelope. Involved in plasmid maintenance, in respiration and in cell proliferation. The chain is Phosphatidic acid phosphohydrolase 1 (PAH1) from Saccharomyces cerevisiae (strain ATCC 204508 / S288c) (Baker's yeast).